Consider the following 502-residue polypeptide: Glycerol kinase (502 aa).

Thr-14 contacts ADP. ATP contacts are provided by Thr-14, Thr-15, and Ser-16. Thr-14 is a binding site for sn-glycerol 3-phosphate. Arg-18 is an ADP binding site. Sn-glycerol 3-phosphate contacts are provided by Arg-84, Glu-85, Tyr-136, and Asp-246. Glycerol-binding residues include Arg-84, Glu-85, Tyr-136, Asp-246, and Gln-247. Thr-268 and Gly-311 together coordinate ADP. ATP-binding residues include Thr-268, Gly-311, Gln-315, and Gly-412. ADP is bound by residues Gly-412 and Asn-416.

This sequence belongs to the FGGY kinase family. As to quaternary structure, homotetramer and homodimer (in equilibrium). Heterodimer with EIIA-Glc. Binds 1 zinc ion per glycerol kinase EIIA-Glc dimer. The zinc ion is important for dimerization.

It catalyses the reaction glycerol + ATP = sn-glycerol 3-phosphate + ADP + H(+). It functions in the pathway polyol metabolism; glycerol degradation via glycerol kinase pathway; sn-glycerol 3-phosphate from glycerol: step 1/1. Activity of this regulatory enzyme is affected by several metabolites. Allosterically and non-competitively inhibited by fructose 1,6-bisphosphate (FBP) and unphosphorylated phosphocarrier protein EIIA-Glc (III-Glc), an integral component of the bacterial phosphotransferase (PTS) system. In terms of biological role, key enzyme in the regulation of glycerol uptake and metabolism. Catalyzes the phosphorylation of glycerol to yield sn-glycerol 3-phosphate. This Shigella boydii serotype 18 (strain CDC 3083-94 / BS512) protein is Glycerol kinase.